The primary structure comprises 473 residues: ATP synthase subunit beta (473 aa).

An ATP-binding site is contributed by 158–165 (GGAGVGKT).

This sequence belongs to the ATPase alpha/beta chains family. F-type ATPases have 2 components, CF(1) - the catalytic core - and CF(0) - the membrane proton channel. CF(1) has five subunits: alpha(3), beta(3), gamma(1), delta(1), epsilon(1). CF(0) has three main subunits: a(1), b(2) and c(9-12). The alpha and beta chains form an alternating ring which encloses part of the gamma chain. CF(1) is attached to CF(0) by a central stalk formed by the gamma and epsilon chains, while a peripheral stalk is formed by the delta and b chains.

It localises to the cell membrane. It catalyses the reaction ATP + H2O + 4 H(+)(in) = ADP + phosphate + 5 H(+)(out). Produces ATP from ADP in the presence of a proton gradient across the membrane. The catalytic sites are hosted primarily by the beta subunits. The protein is ATP synthase subunit beta of Geobacillus kaustophilus (strain HTA426).